We begin with the raw amino-acid sequence, 352 residues long: Heat-inducible transcription repressor HrcA (352 aa).

It belongs to the HrcA family.

In terms of biological role, negative regulator of class I heat shock genes (grpE-dnaK-dnaJ and groELS operons). Prevents heat-shock induction of these operons. The protein is Heat-inducible transcription repressor HrcA of Chlorobium phaeobacteroides (strain BS1).